We begin with the raw amino-acid sequence, 227 residues long: Ion-translocating oxidoreductase complex subunit E (227 aa).

The next 6 membrane-spanning stretches (helical) occupy residues 18 to 38 (ALVQLLGLCPLLAVSATVTNA), 39 to 59 (LGLGIATILVLVGSNLIVSLV), 69 to 89 (IPVFVMIIASLVTCVQLLMNA), 93 to 113 (GLYLSLGIFIPLIVTNCIIIG), 125 to 145 (LPAVLDGLWMGMGMTAVLVLL), and 182 to 202 (HFLLAMLPPGAFLGVGFLIAL).

The protein belongs to the NqrDE/RnfAE family. The complex is composed of six subunits: RnfA, RnfB, RnfC, RnfD, RnfE and RnfG.

It is found in the cell inner membrane. Functionally, part of a membrane-bound complex that couples electron transfer with translocation of ions across the membrane. In Aliivibrio fischeri (strain ATCC 700601 / ES114) (Vibrio fischeri), this protein is Ion-translocating oxidoreductase complex subunit E.